The primary structure comprises 394 residues: Large ribosomal subunit protein bL27m (394 aa).

A mitochondrion-targeting transit peptide spans 1–34 (MSFIKQVGKLIRPNDYSSSIFQTSFLNNVIQVRT). Disordered regions lie at residues 36–57 (TKRA…LGPK) and 145–181 (AEAE…QRAS). The span at 145–170 (AEAEKEENHMSRKEFLQQPELEKTRQ) shows a compositional bias: basic and acidic residues.

Belongs to the bacterial ribosomal protein bL27 family.

It localises to the mitochondrion. In terms of biological role, component of the large subunit of mitochondrial ribosome. The protein is Large ribosomal subunit protein bL27m (MRPL2) of Debaryomyces hansenii (strain ATCC 36239 / CBS 767 / BCRC 21394 / JCM 1990 / NBRC 0083 / IGC 2968) (Yeast).